We begin with the raw amino-acid sequence, 304 residues long: Ribonuclease Z (304 aa).

H63, H65, D67, H68, H143, D213, and H271 together coordinate Zn(2+). The active-site Proton acceptor is D67.

The protein belongs to the RNase Z family. As to quaternary structure, homodimer. Zn(2+) serves as cofactor.

The enzyme catalyses Endonucleolytic cleavage of RNA, removing extra 3' nucleotides from tRNA precursor, generating 3' termini of tRNAs. A 3'-hydroxy group is left at the tRNA terminus and a 5'-phosphoryl group is left at the trailer molecule.. Its function is as follows. Zinc phosphodiesterase, which displays some tRNA 3'-processing endonuclease activity. Probably involved in tRNA maturation, by removing a 3'-trailer from precursor tRNA. This is Ribonuclease Z from Porphyromonas gingivalis (strain ATCC 33277 / DSM 20709 / CIP 103683 / JCM 12257 / NCTC 11834 / 2561).